The primary structure comprises 179 residues: Natural killer cells antigen CD94 (179 aa).

Topologically, residues 1-10 (MAVFKTTLWR) are cytoplasmic. A helical; Signal-anchor for type II membrane protein transmembrane segment spans residues 11-31 (LISGTLGIICLSLMATLGILL). Over 32–179 (KNSFTKLSIE…NRYICKQQLI (148 aa)) the chain is Extracellular. 2 disulfide bridges follow: Cys58/Cys70 and Cys61/Cys72. Positions 68–175 (YRCNCYFISS…CEDKNRYICK (108 aa)) constitute a C-type lectin domain. N-linked (GlcNAc...) asparagine glycans are attached at residues Asn83 and Asn132. 2 disulfide bridges follow: Cys89-Cys174 and Cys152-Cys166.

Can form disulfide-bonded heterodimer with NKG2 family members KLRC1 and KLRC2. KLRD1-KLRC1 heterodimer interacts with peptide-bound MHC-E-B2M heterotrimeric complex. KLRD1 plays a prominent role in directly interacting with MHC-E. KLRD1-KLRC1 interacts with much higher affinity with peptide-bound MHC-E-B2M than KLRD1-KLRC2. Interacts with the adapter protein TYROBP/DAP12; this interaction is required for cell surface expression and cell activation. Natural killer cells.

It localises to the cell membrane. In terms of biological role, immune receptor involved in self-nonself discrimination. In complex with KLRC1 or KLRC2 on cytotoxic and regulatory lymphocyte subsets, recognizes non-classical major histocompatibility (MHC) class Ib molecule MHC-E loaded with self-peptides derived from the signal sequence of classical MHC class Ia and non-classical MHC class Ib molecules. Enables cytotoxic cells to monitor the expression of MHC class I molecules in healthy cells and to tolerate self. Primarily functions as a ligand binding subunit as it lacks the capacity to signal. Functionally, KLRD1-KLRC1 acts as an immune inhibitory receptor. Key inhibitory receptor on natural killer (NK) cells that regulates their activation and effector functions. Dominantly counteracts T cell receptor signaling on a subset of memory/effector CD8-positive T cells as part of an antigen-driven response to avoid autoimmunity. On intraepithelial CD8-positive gamma-delta regulatory T cells triggers TGFB1 secretion, which in turn limits the cytotoxic programming of intraepithelial CD8-positive alpha-beta T cells, distinguishing harmless from pathogenic antigens. In MHC-E-rich tumor microenvironment, acts as an immune inhibitory checkpoint and may contribute to progressive loss of effector functions of NK cells and tumor-specific T cells, a state known as cell exhaustion. Upon MHC-E-peptide binding, transmits intracellular signals through KLRC1 immunoreceptor tyrosine-based inhibition motifs (ITIMs) by recruiting INPP5D/SHIP-1 and INPPL1/SHIP-2 tyrosine phosphatases to ITIMs, and ultimately opposing signals transmitted by activating receptors through dephosphorylation of proximal signaling molecules. Its function is as follows. KLRD1-KLRC2 acts as an immune activating receptor. On cytotoxic lymphocyte subsets recognizes MHC-E loaded with signal sequence-derived peptides from non-classical MHC class Ib MHC-G molecules, likely playing a role in the generation and effector functions of adaptive NK cells and in maternal-fetal tolerance during pregnancy. Regulates the effector functions of terminally differentiated cytotoxic lymphocyte subsets, and in particular may play a role in adaptive NK cell response to viral infection. Upon MHC-E-peptide binding, transmits intracellular signals via the adapter protein TYROBP/DAP12, triggering the phosphorylation of proximal signaling molecules and cell activation. The polypeptide is Natural killer cells antigen CD94 (KLRD1) (Pan troglodytes (Chimpanzee)).